A 202-amino-acid polypeptide reads, in one-letter code: Ribonuclease HII (202 aa).

The 185-residue stretch at Thr-18 to Gln-202 folds into the RNase H type-2 domain. Positions 24, 25, and 116 each coordinate a divalent metal cation.

Belongs to the RNase HII family. Mn(2+) serves as cofactor. It depends on Mg(2+) as a cofactor.

The protein localises to the cytoplasm. It carries out the reaction Endonucleolytic cleavage to 5'-phosphomonoester.. Endonuclease that specifically degrades the RNA of RNA-DNA hybrids. The protein is Ribonuclease HII of Acholeplasma laidlawii (strain PG-8A).